The sequence spans 911 residues: Probable dipeptidyl-aminopeptidase B (911 aa).

Residues 1–39 (MPRPRAAKEEETELLAQHQESPRPSSDGSEASASSISTT) are disordered. The Cytoplasmic portion of the chain corresponds to 1-97 (MPRPRAAKEE…TPVDKKARRT (97 aa)). The segment covering 25–39 (SSDGSEASASSISTT) has biased composition (low complexity). A helical; Signal-anchor for type II membrane protein transmembrane segment spans residues 98–118 (LWIVGTICAVGWALALVSFLM). Over 119 to 911 (NGNYKHSSTR…AQADARSLGR (793 aa)) the chain is Vacuolar. Residues N268 and N564 are each glycosylated (N-linked (GlcNAc...) asparagine). The active-site Charge relay system is S755. N809 carries N-linked (GlcNAc...) asparagine glycosylation. Residues D832 and H865 each act as charge relay system in the active site.

The protein belongs to the peptidase S9B family.

It localises to the vacuole membrane. The enzyme catalyses Release of an N-terminal dipeptide, Xaa-Yaa-|-Zaa-, from a polypeptide, preferentially when Yaa is Pro, provided Zaa is neither Pro nor hydroxyproline.. Type IV dipeptidyl-peptidase which removes N-terminal dipeptides sequentially from polypeptides having unsubstituted N-termini provided that the penultimate residue is proline. The chain is Probable dipeptidyl-aminopeptidase B (DAPB) from Phaeosphaeria nodorum (strain SN15 / ATCC MYA-4574 / FGSC 10173) (Glume blotch fungus).